Here is a 600-residue protein sequence, read N- to C-terminus: Proline--tRNA ligase (600 aa).

Belongs to the class-II aminoacyl-tRNA synthetase family. ProS type 1 subfamily. Homodimer.

The protein localises to the cytoplasm. It catalyses the reaction tRNA(Pro) + L-proline + ATP = L-prolyl-tRNA(Pro) + AMP + diphosphate. Functionally, catalyzes the attachment of proline to tRNA(Pro) in a two-step reaction: proline is first activated by ATP to form Pro-AMP and then transferred to the acceptor end of tRNA(Pro). As ProRS can inadvertently accommodate and process non-cognate amino acids such as alanine and cysteine, to avoid such errors it has two additional distinct editing activities against alanine. One activity is designated as 'pretransfer' editing and involves the tRNA(Pro)-independent hydrolysis of activated Ala-AMP. The other activity is designated 'posttransfer' editing and involves deacylation of mischarged Ala-tRNA(Pro). The misacylated Cys-tRNA(Pro) is not edited by ProRS. This is Proline--tRNA ligase from Prochlorococcus marinus (strain MIT 9301).